The sequence spans 88 residues: Large ribosomal subunit protein eL31 (88 aa).

The protein belongs to the eukaryotic ribosomal protein eL31 family.

The polypeptide is Large ribosomal subunit protein eL31 (Saccharolobus islandicus (strain Y.N.15.51 / Yellowstone #2) (Sulfolobus islandicus)).